The primary structure comprises 577 residues: Phosphoenolpyruvate-protein phosphotransferase (577 aa).

His191 functions as the Tele-phosphohistidine intermediate in the catalytic mechanism. Arg298 and Arg334 together coordinate phosphoenolpyruvate. 2 residues coordinate Mg(2+): Glu435 and Asp459. Phosphoenolpyruvate contacts are provided by residues 458–459 and Arg469; that span reads ND. The active-site Proton donor is Cys506.

This sequence belongs to the PEP-utilizing enzyme family. In terms of assembly, homodimer. Mg(2+) serves as cofactor.

Its subcellular location is the cytoplasm. It carries out the reaction L-histidyl-[protein] + phosphoenolpyruvate = N(pros)-phospho-L-histidyl-[protein] + pyruvate. Its function is as follows. General (non sugar-specific) component of the phosphoenolpyruvate-dependent sugar phosphotransferase system (sugar PTS). This major carbohydrate active-transport system catalyzes the phosphorylation of incoming sugar substrates concomitantly with their translocation across the cell membrane. Enzyme I transfers the phosphoryl group from phosphoenolpyruvate (PEP) to the phosphoryl carrier protein (HPr). The sequence is that of Phosphoenolpyruvate-protein phosphotransferase (ptsI) from Streptococcus equinus (Streptococcus bovis).